A 508-amino-acid polypeptide reads, in one-letter code: Phenylacetaldehyde synthase (508 aa).

Positions 203 and 318 each coordinate L-phenylalanine. Residue K319 is modified to N6-(pyridoxal phosphate)lysine. F348 provides a ligand contact to L-phenylalanine.

The protein belongs to the group II decarboxylase family. As to quaternary structure, homotetramer. It depends on pyridoxal 5'-phosphate as a cofactor.

The enzyme catalyses L-phenylalanine + O2 + H2O + H(+) = 2-phenylacetaldehyde + H2O2 + NH4(+) + CO2. Functionally, bifunctional enzyme that catalyzes the decarboxylation of L-phenylalanine to produce 2-phenylethylamine, which is then oxidized to form 2-phenylacetaldehyde, a constituent of floral scent in petals. 2-phenylacetaldehyde is a precursor of 2-phenylethanol, another constituent of floral scent in petals. In Rosa hybrid cultivar, this protein is Phenylacetaldehyde synthase.